The sequence spans 86 residues: Secreted transmembrane peptide 6 (86 aa).

Positions 1 to 31 (MGMKSPNIAAFMLPLLLILFTLSSQLKVVES) are cleaved as a signal peptide. The short motif at 45–58 (IVYTPPSRSCGTSP) is the SCOOP motif element. The short motif at 51–53 (SRS) is the SxS motif essential for MIK2 binding element.

It belongs to the serine rich endogenous peptide (SCOOP) phytocytokine family. In terms of assembly, interacts with MIK2 (via extracellular leucine-rich repeat domain); this interaction triggers the formation of complex between MIK2 and the BAK1/SERK3 and SERK4 coreceptors, and subsequent BAK1 activation by phosphorylation. Mostly expressed in leaves, and, to a lower extent, in roots, stems, siliques, seeds and flowers.

It is found in the cell membrane. The protein resides in the secreted. The protein localises to the extracellular space. Its subcellular location is the apoplast. In terms of biological role, brassicaceae-specific phytocytokine (plant endogenous peptide released into the apoplast) perceived by MIK2 in a BAK1/SERK3 and SERK4 coreceptors-dependent manner, that modulates various physiological and antimicrobial processes including growth prevention and reactive oxygen species (ROS) response regulation. Prevents general growth and development. This chain is Secreted transmembrane peptide 6, found in Arabidopsis thaliana (Mouse-ear cress).